Consider the following 513-residue polypeptide: MNMTAFLLFLAIVGLTLIITYFAAKRTKTTSEFYTAGGGLTGVQNGLAIAGDYMSAASFLGIAGMIALYGFDGFFYSIGFLVAYLVVLYIVAEPLRNLGKYTMADMIAARFKEKKIRGVAALNTIAISTFYMIAQLVGAGALIKLLLGLDYTAAVLIVGVLMTIYVVFGGMIATSWVQIIKAVLLMAGTLVISIIVFSKFGFSLNTMFEQMKTATPLGADFLNPGNKYKVPLETLSLNLALVLGTAGLPHILIRFYTVKDAKTARTSVVSATWIIGVFYIMTVFLGFGAAAFVGFDAITAADQAGNMAAPLLAKALGGDFLFAFVSAIAFATILAVVTGLVLSAASAFAHDIYSQIIRKGEATEKEQMKAARWASVAVSVLSILLAIFAQSLNVAFLVALAFAVAASANLPLIVFTVFWKRFNASGALWGSLTGLISALVLVSMSPSVWDPAGGAIFTGDPLIPLSNPGIISIPLGFLGAWLGTVLSSDKTIDEDTFAEIQVKAHTGVHMEQE.

Helical transmembrane passes span 3 to 23 (MTAFLLFLAIVGLTLIITYFA), 47 to 67 (LAIAGDYMSAASFLGIAGMIA), 71 to 91 (FDGFFYSIGFLVAYLVVLYIV), 129 to 149 (TFYMIAQLVGAGALIKLLLGL), 153 to 173 (AAVLIVGVLMTIYVVFGGMIA), 177 to 197 (VQIIKAVLLMAGTLVISIIVF), 233 to 253 (ETLSLNLALVLGTAGLPHILI), 273 to 293 (WIIGVFYIMTVFLGFGAAAFV), 320 to 340 (FLFAFVSAIAFATILAVVTGL), 374 to 394 (ASVAVSVLSILLAIFAQSLNV), 395 to 415 (AFLVALAFAVAASANLPLIVF), 424 to 444 (ASGALWGSLTGLISALVLVSM), and 462 to 482 (LIPLSNPGIISIPLGFLGAWL).

Belongs to the sodium:solute symporter (SSF) (TC 2.A.21) family.

Its subcellular location is the cell membrane. This is an uncharacterized protein from Bacillus subtilis (strain 168).